Here is an 876-residue protein sequence, read N- to C-terminus: DNA mismatch repair protein MutS (876 aa).

626 to 633 contacts ATP; it reads GPNMAGKS. Residues 829 to 856 form a disordered region; the sequence is FRAAPPPPAPAAPPKASQVEERLRAIQP. Pro residues predominate over residues 832–841; it reads APPPPAPAAP.

The protein belongs to the DNA mismatch repair MutS family.

Functionally, this protein is involved in the repair of mismatches in DNA. It is possible that it carries out the mismatch recognition step. This protein has a weak ATPase activity. The polypeptide is DNA mismatch repair protein MutS (Cereibacter sphaeroides (strain ATCC 17025 / ATH 2.4.3) (Rhodobacter sphaeroides)).